A 328-amino-acid chain; its full sequence is Sterol-4-alpha-carboxylate 3-dehydrogenase, decarboxylating (328 aa).

Catalysis depends on Tyr145, which acts as the Proton acceptor. Position 149 (Lys149) interacts with NAD(+). The helical transmembrane segment at 259–279 (LHMVLPTPIALSLVWIMALIW) threads the bilayer.

It belongs to the 3-beta-HSD family. As to quaternary structure, homodimer.

Its subcellular location is the endoplasmic reticulum membrane. It localises to the lipid droplet. The enzyme catalyses a 3beta-hydroxysteroid-4alpha-carboxylate + NADP(+) = a 3-oxosteroid + CO2 + NADPH. It catalyses the reaction a 3beta-hydroxysteroid-4alpha-carboxylate + NAD(+) = a 3-oxosteroid + CO2 + NADH. The protein operates within steroid biosynthesis; zymosterol biosynthesis; zymosterol from lanosterol: step 4/6. Its function is as follows. Catalyzes the NAD(P)(+)-dependent oxidative decarboxylation of the C4 methyl groups of 4-alpha-carboxysterols in post-squalene cholesterol biosynthesis. This is Sterol-4-alpha-carboxylate 3-dehydrogenase, decarboxylating (nsdhl) from Dictyostelium discoideum (Social amoeba).